The sequence spans 733 residues: Catalase-peroxidase (733 aa).

The tryptophyl-tyrosyl-methioninium (Trp-Tyr) (with M-245) cross-link spans 96-219 (WHSAGTYRTG…LAAVQMGLIY (124 aa)). Catalysis depends on His-97, which acts as the Proton acceptor. Residues 219 to 245 (YVNPEGPNGNPDPLAAAKDIRETFARM) constitute a cross-link (tryptophyl-tyrosyl-methioninium (Tyr-Met) (with W-96)). His-260 contributes to the heme b binding site.

The protein belongs to the peroxidase family. Peroxidase/catalase subfamily. Homodimer or homotetramer. Heme b is required as a cofactor. Formation of the three residue Trp-Tyr-Met cross-link is important for the catalase, but not the peroxidase activity of the enzyme.

The catalysed reaction is H2O2 + AH2 = A + 2 H2O. It carries out the reaction 2 H2O2 = O2 + 2 H2O. In terms of biological role, bifunctional enzyme with both catalase and broad-spectrum peroxidase activity. The sequence is that of Catalase-peroxidase from Geobacter sp. (strain M21).